The chain runs to 142 residues: Large ribosomal subunit protein uL11 (142 aa).

This sequence belongs to the universal ribosomal protein uL11 family. Part of the ribosomal stalk of the 50S ribosomal subunit. Interacts with L10 and the large rRNA to form the base of the stalk. L10 forms an elongated spine to which L12 dimers bind in a sequential fashion forming a multimeric L10(L12)X complex. Post-translationally, one or more lysine residues are methylated.

Forms part of the ribosomal stalk which helps the ribosome interact with GTP-bound translation factors. The protein is Large ribosomal subunit protein uL11 of Liberibacter asiaticus (Citrus greening disease).